Reading from the N-terminus, the 466-residue chain is Asparagine--tRNA ligase (466 aa).

Belongs to the class-II aminoacyl-tRNA synthetase family. Homodimer.

It is found in the cytoplasm. It catalyses the reaction tRNA(Asn) + L-asparagine + ATP = L-asparaginyl-tRNA(Asn) + AMP + diphosphate + H(+). The chain is Asparagine--tRNA ligase from Salmonella choleraesuis (strain SC-B67).